A 438-amino-acid chain; its full sequence is UDP-N-acetylmuramoylalanine--D-glutamate ligase (438 aa).

112–118 serves as a coordination point for ATP; that stretch reads GSNGKST.

The protein belongs to the MurCDEF family.

It is found in the cytoplasm. The catalysed reaction is UDP-N-acetyl-alpha-D-muramoyl-L-alanine + D-glutamate + ATP = UDP-N-acetyl-alpha-D-muramoyl-L-alanyl-D-glutamate + ADP + phosphate + H(+). The protein operates within cell wall biogenesis; peptidoglycan biosynthesis. Its function is as follows. Cell wall formation. Catalyzes the addition of glutamate to the nucleotide precursor UDP-N-acetylmuramoyl-L-alanine (UMA). This Salmonella paratyphi A (strain ATCC 9150 / SARB42) protein is UDP-N-acetylmuramoylalanine--D-glutamate ligase.